Here is a 327-residue protein sequence, read N- to C-terminus: WRKY transcription factor WRKY76 (327 aa).

Residues 56–76 (AKILEAKVTQMSEENRRLTEV) are a coiled coil. The segment at 88-134 (LGLDGSASPPRPVSPLSGKKRSRESMETANSCDANSNRHQGGDADHA) is disordered. A Nuclear localization signal motif is present at residues 106 to 112 (KKRSRES). Polar residues predominate over residues 114–126 (ETANSCDANSNRH). The WRKY DNA-binding region spans 160–226 (DTSLVVKDGY…YEGEHNHPHP (67 aa)).

Belongs to the WRKY group II-a family.

It localises to the nucleus. Functionally, transcription repressor. Interacts specifically with the W box (5'-(T)TGAC[CT]-3'), a frequently occurring elicitor-responsive cis-acting element. Regulates, probably indirectly, the activation of defense-related genes during defense response. Modulates plant innate immunity against X.oryzae pv. oryzae (Xoo). In Oryza sativa subsp. indica (Rice), this protein is WRKY transcription factor WRKY76.